The chain runs to 150 residues: Avidin-related protein 7 (150 aa).

The N-terminal stretch at M1–S24 is a signal peptide. The Avidin-like domain occupies R26 to T147. A disulfide bridge links C28 with C105. Residues N36 and S40 each coordinate biotin. N-linked (GlcNAc...) asparagine glycans are attached at residues N41 and N54. The biotin site is built by Y57, T59, and D63. The N-linked (GlcNAc...) asparagine glycan is linked to N93. Biotin-binding residues include S95, S99, and N140. A glycan (N-linked (GlcNAc...) asparagine) is linked at N141.

Belongs to the avidin/streptavidin family. In terms of assembly, homotetramer. Glycosylated.

It localises to the secreted. Its function is as follows. Forms a strong non-covalent specific complex with biotin. This Gallus gallus (Chicken) protein is Avidin-related protein 7 (AVR7).